A 388-amino-acid polypeptide reads, in one-letter code: Na(+)/H(+) antiporter NhaA (388 aa).

Topologically, residues 1 to 11 are cytoplasmic; sequence MKHLHRFFSSD. A helical membrane pass occupies residues 12–31; it reads ASGGIILIIAAVLAMIMANS. The Periplasmic segment spans residues 32–58; sequence GATSGWYHDFLETPVQLRVGTLEINKN. The helical transmembrane segment at 59-80 threads the bilayer; that stretch reads MLLWINDALMAVFFLLVGLEVK. At 81–96 the chain is on the cytoplasmic side; the sequence is RELMQGSLASLRQAAF. Residues 97–116 form a helical membrane-spanning segment; the sequence is PVIAAIGGMIVPALLYLAFN. At 117-122 the chain is on the periplasmic side; sequence YADPIT. The helical transmembrane segment at 123 to 130 threads the bilayer; it reads REGWAIPA. Residues 131–154 lie on the Cytoplasmic side of the membrane; that stretch reads ATDIAFALGVLALLGSRVPLALKI. The chain crosses the membrane as a helical span at residues 155–176; it reads FLMALAIIDDLGAIIIIALFYT. The Periplasmic segment spans residues 177-180; that stretch reads NDLS. A helical membrane pass occupies residues 181-200; that stretch reads MASLGVAAVAIAVLVVLNLC. Over 201 to 204 the chain is Cytoplasmic; that stretch reads GVRR. Residues 205–222 form a helical membrane-spanning segment; that stretch reads TGVYILVGVVLWTAVLKS. Residue Gly-223 is a topological domain, periplasmic. A helical transmembrane segment spans residues 224 to 236; sequence VHATLAGVIVGFF. Residues 237–253 are Cytoplasmic-facing; sequence IPLKEKHGRSPAKRLEH. Residues 254 to 272 traverse the membrane as a helical segment; it reads VLHPWVAYLILPLFAFANA. The Periplasmic segment spans residues 273-286; that stretch reads GVSLQGVTLEGLTS. Residues 287–310 traverse the membrane as a helical segment; that stretch reads ILPLGIIAGLLIGKPLGISLFCWL. Over 311 to 339 the chain is Cytoplasmic; that stretch reads ALRLKLAHLPEGTTYQQIMAVGILCGIGF. A helical transmembrane segment spans residues 340–350; that stretch reads TMSIFIASLAF. The Periplasmic portion of the chain corresponds to 351 to 357; it reads GSVDPEL. A helical membrane pass occupies residues 358–380; sequence INWAKLGILVGSISSAVIGYSWL. Over 381-388 the chain is Cytoplasmic; the sequence is RVRLRPSV.

It belongs to the NhaA Na(+)/H(+) (TC 2.A.33) antiporter family.

It is found in the cell inner membrane. The enzyme catalyses Na(+)(in) + 2 H(+)(out) = Na(+)(out) + 2 H(+)(in). Functionally, na(+)/H(+) antiporter that extrudes sodium in exchange for external protons. The polypeptide is Na(+)/H(+) antiporter NhaA (Escherichia coli O1:K1 / APEC).